We begin with the raw amino-acid sequence, 306 residues long: D-alanine--D-alanine ligase (306 aa).

One can recognise an ATP-grasp domain in the interval 107 to 303; sequence KHLFKSAGLS…FEQLVVRILE (197 aa). Residue 134–189 participates in ATP binding; the sequence is IMQQFKKVMVKPSHEGSSIGMAQASTPQELEDALSNAFKFDSQVLVEQWISGREFT. Aspartate 257, glutamate 270, and asparagine 272 together coordinate Mg(2+).

The protein belongs to the D-alanine--D-alanine ligase family. Requires Mg(2+) as cofactor. Mn(2+) is required as a cofactor.

The protein localises to the cytoplasm. The enzyme catalyses 2 D-alanine + ATP = D-alanyl-D-alanine + ADP + phosphate + H(+). It functions in the pathway cell wall biogenesis; peptidoglycan biosynthesis. In terms of biological role, cell wall formation. This is D-alanine--D-alanine ligase from Pseudoalteromonas translucida (strain TAC 125).